Consider the following 96-residue polypeptide: Large ribosomal subunit protein uL23 (96 aa).

This sequence belongs to the universal ribosomal protein uL23 family. In terms of assembly, part of the 50S ribosomal subunit. Contacts protein L29, and trigger factor when it is bound to the ribosome.

Its function is as follows. One of the early assembly proteins it binds 23S rRNA. One of the proteins that surrounds the polypeptide exit tunnel on the outside of the ribosome. Forms the main docking site for trigger factor binding to the ribosome. This chain is Large ribosomal subunit protein uL23, found in Maridesulfovibrio salexigens (strain ATCC 14822 / DSM 2638 / NCIMB 8403 / VKM B-1763) (Desulfovibrio salexigens).